The sequence spans 323 residues: Elongation factor P--(R)-beta-lysine ligase (323 aa).

Position 76–78 (76–78) interacts with substrate; the sequence is SPE. ATP is bound by residues 100 to 102 and Asn109; that span reads RNE. Tyr118 contacts substrate. Residue 242 to 243 participates in ATP binding; that stretch reads EL. Glu249 contributes to the substrate binding site. Gly298 provides a ligand contact to ATP.

It belongs to the class-II aminoacyl-tRNA synthetase family. EpmA subfamily. In terms of assembly, homodimer.

It carries out the reaction D-beta-lysine + L-lysyl-[protein] + ATP = N(6)-((3R)-3,6-diaminohexanoyl)-L-lysyl-[protein] + AMP + diphosphate + H(+). Functionally, with EpmB is involved in the beta-lysylation step of the post-translational modification of translation elongation factor P (EF-P). Catalyzes the ATP-dependent activation of (R)-beta-lysine produced by EpmB, forming a lysyl-adenylate, from which the beta-lysyl moiety is then transferred to the epsilon-amino group of a conserved specific lysine residue in EF-P. The sequence is that of Elongation factor P--(R)-beta-lysine ligase from Mannheimia succiniciproducens (strain KCTC 0769BP / MBEL55E).